A 251-amino-acid chain; its full sequence is Transcription factor bHLH144 (251 aa).

Disordered stretches follow at residues 1-20 (MQNN…NMHN), 130-161 (YEEN…YGNT), and 173-202 (NNNN…RKKM). Residues 9-18 (FSDEVGDRNM) show a composition bias toward basic and acidic residues. Acidic residues predominate over residues 130-147 (YEENDDNEGEEDGGDSEE). Positions 148–161 (VSTARTSSRDYGNT) are enriched in polar residues. Low complexity predominate over residues 173-192 (NNNNNNNSRKQSLSGSASSS). The region spanning 186–235 (SGSASSSNNDGKGRKKMKKMMGVLRRIVPGGEQMNTACVLDEAVQYLKSL) is the bHLH domain.

In terms of assembly, homodimer. Interacts with LHW.

The protein resides in the nucleus. This Arabidopsis thaliana (Mouse-ear cress) protein is Transcription factor bHLH144 (BHLH144).